The sequence spans 680 residues: Zinc finger protein OBI1 (680 aa).

The region spanning 16–87 (VSFEDVAVDF…AEATEQCLPG (72 aa)) is the KRAB domain. A C2H2-type 1; degenerate zinc finger spans residues 263-280 (CHKIFPNKTELSNHDAMH). C2H2-type zinc fingers lie at residues 455-477 (FRCN…QRMH), 483-505 (HECK…QGIH), 511-533 (YECN…ERTH), 539-561 (FECK…QKIH), 567-589 (HKCK…QKTH), 595-617 (YECK…ETTH), 623-645 (YECK…QVIH), and 651-673 (FECK…QKIH).

Polyubiquitinated, leading to its degradation via the ubiquitin-proteasome pathway. In terms of tissue distribution, expressed during osteogenic differentiation where levels increase from the first days of differentiation and remain high during the whole process. Highly expressed in lung.

The protein resides in the nucleus. Its function is as follows. May modulate osteogenic differentiation, at least in part, through the bone morphogenetic protein (BMP) signaling pathway, increasing RUNX2 activation and leading to osteoblast commitment and maturation. The sequence is that of Zinc finger protein OBI1 (ObI1) from Mus musculus (Mouse).